Here is a 228-residue protein sequence, read N- to C-terminus: Glycerol-3-phosphate acyltransferase (228 aa).

6 helical membrane passes run 1 to 21, 56 to 76, 104 to 124, 136 to 156, 161 to 181, and 183 to 203; these read MINW…LGAT, VPAL…IALV, MVII…WIGF, ILLA…IVVL, IVSL…FFTG, and PLPY…RHIS.

The protein belongs to the PlsY family. In terms of assembly, probably interacts with PlsX.

Its subcellular location is the cell inner membrane. It catalyses the reaction an acyl phosphate + sn-glycerol 3-phosphate = a 1-acyl-sn-glycero-3-phosphate + phosphate. The protein operates within lipid metabolism; phospholipid metabolism. Catalyzes the transfer of an acyl group from acyl-phosphate (acyl-PO(4)) to glycerol-3-phosphate (G3P) to form lysophosphatidic acid (LPA). This enzyme utilizes acyl-phosphate as fatty acyl donor, but not acyl-CoA or acyl-ACP. The sequence is that of Glycerol-3-phosphate acyltransferase from Trichodesmium erythraeum (strain IMS101).